The following is a 423-amino-acid chain: Maintenance of mitochondrial morphology protein 1 (423 aa).

Residues 1–15 (MWLDDVASELSFTQG) lie on the Lumenal side of the membrane. A helical transmembrane segment spans residues 16–36 (LLLGQLSIVILIGAFIKFFIF). Residues 37-423 (GDPPSPDVSA…PGSMPGLSMA (387 aa)) are Cytoplasmic-facing. Positions 110 to 322 (QPESLDWFNV…EPRFQQIELP (213 aa)) constitute an SMP-LTD domain. 2 disordered regions span residues 327–370 (RKKN…EAET) and 394–423 (SEEGLRFRRRSRGRGDEYAMPGSMPGLSMA). Residues 350–367 (RSRDVERDLREEARKEVE) show a composition bias toward basic and acidic residues.

Belongs to the MMM1 family. As to quaternary structure, homodimer. Component of the ER-mitochondria encounter structure (ERMES) or MDM complex, composed of mmm1, mdm10, mdm12 and mdm34. A mmm1 homodimer associates with one molecule of mdm12 on each side in a pairwise head-to-tail manner, and the SMP-LTD domains of mmm1 and mdm12 generate a continuous hydrophobic tunnel for phospholipid trafficking.

The protein resides in the endoplasmic reticulum membrane. In terms of biological role, component of the ERMES/MDM complex, which serves as a molecular tether to connect the endoplasmic reticulum (ER) and mitochondria. Components of this complex are involved in the control of mitochondrial shape and protein biogenesis, and function in nonvesicular lipid trafficking between the ER and mitochondria. The mdm12-mmm1 subcomplex functions in the major beta-barrel assembly pathway that is responsible for biogenesis of all outer membrane beta-barrel proteins, and acts in a late step after the SAM complex. The mdm10-mdm12-mmm1 subcomplex further acts in the TOM40-specific pathway after the action of the mdm12-mmm1 complex. Essential for establishing and maintaining the structure of mitochondria and maintenance of mtDNA nucleoids. In Sclerotinia sclerotiorum (strain ATCC 18683 / 1980 / Ss-1) (White mold), this protein is Maintenance of mitochondrial morphology protein 1.